The following is a 227-amino-acid chain: Large ribosomal subunit protein uL3 (227 aa).

Belongs to the universal ribosomal protein uL3 family. Part of the 50S ribosomal subunit. Forms a cluster with proteins L14 and L19.

Functionally, one of the primary rRNA binding proteins, it binds directly near the 3'-end of the 23S rRNA, where it nucleates assembly of the 50S subunit. This chain is Large ribosomal subunit protein uL3, found in Persephonella marina (strain DSM 14350 / EX-H1).